A 158-amino-acid chain; its full sequence is MVESINSLEELGTVAKTEAAAPVDVQKLDAQGRAYATGKRKDAVARVWVKPGTGKITVNDKEFEKYFARPVLQMILQQPIVASNRAGQFDIVATVAGGGLSGQAGAVRHGISKALTYYEPGLRTVLKKGGFLTRDSRVVERKKYGKAKARRSFQFSKR.

It belongs to the universal ribosomal protein uS9 family.

In Brucella melitensis biotype 2 (strain ATCC 23457), this protein is Small ribosomal subunit protein uS9.